The primary structure comprises 728 residues: Methylmalonyl-CoA mutase large subunit (728 aa).

Tyr-75, Met-78, Arg-82, Thr-85, Arg-87, Tyr-89, and Ser-114 together coordinate (R)-methylmalonyl-CoA. Phe-117 and Ala-139 together coordinate cob(II)alamin. Residues Thr-195 and Gln-197 each contribute to the (R)-methylmalonyl-CoA site. Cob(II)alamin-binding residues include Val-206 and Arg-207. Residues Arg-207, His-244, Arg-283, and Ser-285 each coordinate (R)-methylmalonyl-CoA. Gly-333, Glu-370, Ala-373, Gly-609, His-610, Asp-611, Arg-612, Ser-655, Leu-657, Gly-686, and Thr-709 together coordinate cob(II)alamin. One can recognise a B12-binding domain in the interval Arg-597–Ala-728.

This sequence belongs to the methylmalonyl-CoA mutase family. Heterodimer of an alpha and a beta chain. Adenosylcob(III)alamin is required as a cofactor.

It carries out the reaction (R)-methylmalonyl-CoA = succinyl-CoA. Functionally, catalyzes the reversible conversion of succinyl-CoA to (R)-methylmalonyl-CoA through a radical mechanism. Is involved in the fermentation of pyruvate to propanoate that occurs in Propionibacteria. The chain is Methylmalonyl-CoA mutase large subunit (mutB) from Propionibacterium freudenreichii subsp. shermanii.